A 476-amino-acid chain; its full sequence is Glycogen synthase (476 aa).

Lys-15 is an ADP-alpha-D-glucose binding site.

This sequence belongs to the glycosyltransferase 1 family. Bacterial/plant glycogen synthase subfamily.

The enzyme catalyses [(1-&gt;4)-alpha-D-glucosyl](n) + ADP-alpha-D-glucose = [(1-&gt;4)-alpha-D-glucosyl](n+1) + ADP + H(+). Its pathway is glycan biosynthesis; glycogen biosynthesis. In terms of biological role, synthesizes alpha-1,4-glucan chains using ADP-glucose. In Haemophilus influenzae (strain 86-028NP), this protein is Glycogen synthase.